The chain runs to 193 residues: Sarcoplasmic calcium-binding protein, alpha chain (193 aa).

IgE-binding epitope stretches follow at residues 10–36 (KYVVRYMYDIDNNGFLDKNDFECLAVR) and 49–72 (DAYANNQKIMRNLWNEIAELADFN). EF-hand domains follow at residues 16 to 40 (MYDIDNNGFLDKNDFECLAVRNTLI), 57 to 92 (IMRNLWNEIAELADFNKDGEVTVDEFKQAVQKHCQG), and 101 to 136 (AFKVFIANQFKAIDVNGDGKVGLDEYRLDCITRSAF). The Ca(2+) site is built by Asp18, Asp20, Asn22, Asp29, Asp70, Asn72, Asp74, Glu76, Glu81, Asp114, Asn116, Asp118, Lys120, and Glu125. Residues 130 to 147 (CITRSAFAEVKEIDDAYN) are igE-binding epitope.

In terms of assembly, SCPs from crayfish, lobster, and shrimp are polymorphic dimers; three isotypes (alpha-alpha, alpha-beta, and beta-beta) have been identified. As to expression, expressed in tail muscle (at protein level).

In terms of biological role, like parvalbumins, SCPs seem to be more abundant in fast contracting muscles, but no functional relationship can be established from this distribution. This Penaeus vannamei (Whiteleg shrimp) protein is Sarcoplasmic calcium-binding protein, alpha chain.